We begin with the raw amino-acid sequence, 418 residues long: RapA guanosine triphosphatase-activating protein B (418 aa).

One can recognise a Rap-GAP domain in the interval 142 to 407 (LVKVCEPEFN…EKASALINVI (266 aa)). The interval 304–339 (NRVVGEQPSPSLTTTTTTTTTTSPTINSNSPTPSNK) is disordered. The segment covering 311–338 (PSPSLTTTTTTTTTTSPTINSNSPTPSN) has biased composition (low complexity).

In terms of biological role, mediates the deactivation of rap1 during multicellular development and is required for normal morphogenesis. Also required for the correct patterning of specific subtypes of prestalk cells. The sequence is that of RapA guanosine triphosphatase-activating protein B (rapgapB) from Dictyostelium discoideum (Social amoeba).